The primary structure comprises 156 residues: Small ribosomal subunit protein uS7 (156 aa).

This sequence belongs to the universal ribosomal protein uS7 family. As to quaternary structure, part of the 30S ribosomal subunit. Contacts proteins S9 and S11.

One of the primary rRNA binding proteins, it binds directly to 16S rRNA where it nucleates assembly of the head domain of the 30S subunit. Is located at the subunit interface close to the decoding center, probably blocks exit of the E-site tRNA. The sequence is that of Small ribosomal subunit protein uS7 from Janthinobacterium sp. (strain Marseille) (Minibacterium massiliensis).